The primary structure comprises 294 residues: NAD kinase (294 aa).

The active-site Proton acceptor is Asp-74. Residues 74–75 (DG), 148–149 (NE), His-159, Arg-176, Asp-178, 189–194 (TAYSLS), and Gln-249 contribute to the NAD(+) site.

The protein belongs to the NAD kinase family. Requires a divalent metal cation as cofactor.

The protein resides in the cytoplasm. The catalysed reaction is NAD(+) + ATP = ADP + NADP(+) + H(+). Involved in the regulation of the intracellular balance of NAD and NADP, and is a key enzyme in the biosynthesis of NADP. Catalyzes specifically the phosphorylation on 2'-hydroxyl of the adenosine moiety of NAD to yield NADP. The protein is NAD kinase of Vibrio parahaemolyticus serotype O3:K6 (strain RIMD 2210633).